A 989-amino-acid polypeptide reads, in one-letter code: Cellulose synthase A catalytic subunit 4 [UDP-forming] (989 aa).

The Cytoplasmic portion of the chain corresponds to 1 to 184 (MMESGVPPCA…SRIIPISKNK (184 aa)). The Zn(2+) site is built by cysteine 9, cysteine 12, cysteine 20, cysteine 23, cysteine 28, cysteine 31, cysteine 43, and cysteine 46. An RING-type; degenerate zinc finger spans residues 9 to 47 (CAACGDDAHAACRACSYALCKACLDEDAAEGRTTCARCG). Residues 138–149 (KKEKKASAKKAA) are compositionally biased toward basic residues. The disordered stretch occupies residues 138–158 (KKEKKASAKKAAAKAQAPPVE). Residues 185–205 (LTPYRAVIIMRLVVLGLFFHY) form a helical membrane-spanning segment. The Extracellular segment spans residues 206–213 (RITNPVYS). The chain crosses the membrane as a helical span at residues 214-234 (AFGLWMTSVICEIWFGFSWIL). Residues 235 to 772 (DQFPKWCPIN…INTIVYPFTS (538 aa)) are Cytoplasmic-facing. Serine 272, lysine 278, glutamate 279, and aspartate 308 together coordinate UDP-alpha-D-glucose. Residue aspartate 308 is part of the active site. Residues 362–389 (VKERRAMKRDYEEYKVRINALVAKAQKT) are a coiled coil. Position 449 (lysine 449) interacts with UDP-alpha-D-glucose. Residues lysine 450 and aspartate 474 each contribute to the Mn(2+) site. Aspartate 688 is an active-site residue. The helical transmembrane segment at 773 to 793 (LPLIAYCCLPAICLLTGKFII) threads the bilayer. Residues 794–798 (PTLSN) are Extracellular-facing. The helical transmembrane segment at 799-819 (AATIWFLGLFISIIVTSVLEL) threads the bilayer. Residues 820-835 (RWSGIGIEDWWRNEQF) lie on the Cytoplasmic side of the membrane. The chain crosses the membrane as a helical span at residues 836–856 (WVIGGVSAHLFAVFQGILKMI). Residues 857–884 (AGLDTNFTVTAKATDDTEFGELYVFKWT) lie on the Extracellular side of the membrane. Asparagine 862 carries an N-linked (GlcNAc...) asparagine glycan. Residues 885–905 (TVLIPPTSILVLNLVGVVAGF) form a helical membrane-spanning segment. Residues 906-916 (SDALNSGYESW) lie on the Cytoplasmic side of the membrane. The chain crosses the membrane as a helical span at residues 917–937 (GPLFGKVFFAMWVIMHLYPFL). Topologically, residues 938–946 (KGLMGRQNR) are extracellular. Residues 947-967 (TPTIVVLWSVLLASVFSLLWV) traverse the membrane as a helical segment. At 968–989 (KIDPFIGSSETTTTNSCANFDC) the chain is on the cytoplasmic side.

The protein belongs to the glycosyltransferase 2 family. Plant cellulose synthase subfamily. Mn(2+) is required as a cofactor. The cofactor is Zn(2+).

It is found in the cell membrane. It catalyses the reaction [(1-&gt;4)-beta-D-glucosyl](n) + UDP-alpha-D-glucose = [(1-&gt;4)-beta-D-glucosyl](n+1) + UDP + H(+). It functions in the pathway glycan metabolism; plant cellulose biosynthesis. Catalytic subunit of cellulose synthase terminal complexes ('rosettes'), required for beta-1,4-glucan microfibril crystallization, a major mechanism of the cell wall formation. Involved in the secondary cell wall formation. In Oryza sativa subsp. japonica (Rice), this protein is Cellulose synthase A catalytic subunit 4 [UDP-forming] (CESA4).